The primary structure comprises 355 residues: Protein RecA (355 aa).

An ATP-binding site is contributed by 67 to 74; the sequence is GPESSGKT.

The protein belongs to the RecA family.

It localises to the cytoplasm. In terms of biological role, can catalyze the hydrolysis of ATP in the presence of single-stranded DNA, the ATP-dependent uptake of single-stranded DNA by duplex DNA, and the ATP-dependent hybridization of homologous single-stranded DNAs. It interacts with LexA causing its activation and leading to its autocatalytic cleavage. The protein is Protein RecA of Histophilus somni (strain 129Pt) (Haemophilus somnus).